The chain runs to 257 residues: Glycerol-3-phosphate acyltransferase (257 aa).

6 helical membrane passes run 7–27 (IVMA…LIGS), 66–86 (ILTL…TYII), 104–124 (AILV…PIFF), 140–160 (ITVD…ILLI), 164–184 (MSLS…VPGI), and 203–223 (YVIK…SLLI).

This sequence belongs to the PlsY family. Probably interacts with PlsX.

The protein resides in the cell membrane. The enzyme catalyses an acyl phosphate + sn-glycerol 3-phosphate = a 1-acyl-sn-glycero-3-phosphate + phosphate. It functions in the pathway lipid metabolism; phospholipid metabolism. In terms of biological role, catalyzes the transfer of an acyl group from acyl-phosphate (acyl-PO(4)) to glycerol-3-phosphate (G3P) to form lysophosphatidic acid (LPA). This enzyme utilizes acyl-phosphate as fatty acyl donor, but not acyl-CoA or acyl-ACP. This Ureaplasma parvum serovar 3 (strain ATCC 700970) protein is Glycerol-3-phosphate acyltransferase.